The following is a 251-amino-acid chain: NADPH-dependent oxidoreductase (251 aa).

The protein belongs to the flavin oxidoreductase frp family. FMN is required as a cofactor.

Reduces FMN, organic nitro compounds and disulfide DTNB. Involved in maintenance of the cellular redox state and the disulfide stress response. This Staphylococcus haemolyticus (strain JCSC1435) protein is NADPH-dependent oxidoreductase (nfrA).